The primary structure comprises 355 residues: Peptide chain release factor 1 (355 aa).

Q233 bears the N5-methylglutamine mark. A compositionally biased stretch (basic and acidic residues) spans E280–R293. A disordered region spans residues E280–Y308.

The protein belongs to the prokaryotic/mitochondrial release factor family. In terms of processing, methylated by PrmC. Methylation increases the termination efficiency of RF1.

The protein localises to the cytoplasm. In terms of biological role, peptide chain release factor 1 directs the termination of translation in response to the peptide chain termination codons UAG and UAA. This chain is Peptide chain release factor 1, found in Rickettsia felis (strain ATCC VR-1525 / URRWXCal2) (Rickettsia azadi).